The chain runs to 149 residues: uncharacterized protein (149 aa).

An N-acetyltransferase domain is found at 2 to 146 (LEVKTISVED…NHIVMYKTLR (145 aa)).

This sequence belongs to the acetyltransferase family.

This is an uncharacterized protein from Bacillus subtilis (strain 168).